We begin with the raw amino-acid sequence, 336 residues long: Fructose-1,6-bisphosphatase class 1 (336 aa).

Mg(2+) is bound by residues Glu-90, Asp-112, Leu-114, and Asp-115. Residues 115–118, Asn-207, and Lys-273 contribute to the substrate site; that span reads DGSS. Glu-279 contacts Mg(2+).

The protein belongs to the FBPase class 1 family. As to quaternary structure, homotetramer. Mg(2+) serves as cofactor.

Its subcellular location is the cytoplasm. The catalysed reaction is beta-D-fructose 1,6-bisphosphate + H2O = beta-D-fructose 6-phosphate + phosphate. It functions in the pathway carbohydrate biosynthesis; gluconeogenesis. The protein is Fructose-1,6-bisphosphatase class 1 of Xanthomonas axonopodis pv. citri (strain 306).